An 87-amino-acid chain; its full sequence is Mitochondrial import protein 2 (87 aa).

The Cytoplasmic portion of the chain corresponds to 1-53 (MADSEDTSVILQGIDTINSVEGLEEDGYLSDEDTSLSNELADAQRQWEESLQQ). The chain crosses the membrane as a helical span at residues 54-71 (LNKLLNWVLLPLLGKYIG). Residues 72–87 (RRMAKTLWSRFIEHFV) lie on the Mitochondrial intermembrane side of the membrane.

It belongs to the MIM2 family. As to quaternary structure, component of the MIM complex containing at least MIM1 and MIM2. Interacts with MIM1; interaction is direct.

The protein localises to the mitochondrion outer membrane. Functionally, component of the MIM complex required for outer membrane protein import. Involved in import of the subset of proteins with multiple alpha-helical transmembrane segments, including UGO1, TOM20 and FZO1. The polypeptide is Mitochondrial import protein 2 (Saccharomyces cerevisiae (strain ATCC 204508 / S288c) (Baker's yeast)).